The chain runs to 197 residues: Probable GTP-binding protein EngB (197 aa).

An EngB-type G domain is found at 25–197; the sequence is SAPEIAFAGR…VRDEFFKFTR (173 aa). Residues 33–40, 60–64, 79–82, 146–149, and 177–179 each bind GTP; these read GRSNVGKS, GCTRQ, DLPG, TKID, and ISV. Mg(2+)-binding residues include serine 40 and threonine 62.

This sequence belongs to the TRAFAC class TrmE-Era-EngA-EngB-Septin-like GTPase superfamily. EngB GTPase family. Requires Mg(2+) as cofactor.

Functionally, necessary for normal cell division and for the maintenance of normal septation. This chain is Probable GTP-binding protein EngB, found in Wolbachia sp. subsp. Brugia malayi (strain TRS).